A 510-amino-acid polypeptide reads, in one-letter code: Cytochrome P450 52C2 (510 aa).

Residue Cys458 participates in heme binding.

The protein belongs to the cytochrome P450 family. Heme serves as cofactor.

It is found in the membrane. In terms of biological role, together with an NADPH cytochrome P450 the enzyme system catalyzes the terminal hydroxylation as the first step in the assimilation of alkanes and fatty acids. The chain is Cytochrome P450 52C2 (CYP52C2) from Candida maltosa (Yeast).